The following is a 173-amino-acid chain: Crossover junction endodeoxyribonuclease RuvC (173 aa).

Active-site residues include aspartate 8, glutamate 67, and aspartate 139. Residues aspartate 8, glutamate 67, and aspartate 139 each contribute to the Mg(2+) site.

Belongs to the RuvC family. As to quaternary structure, homodimer which binds Holliday junction (HJ) DNA. The HJ becomes 2-fold symmetrical on binding to RuvC with unstacked arms; it has a different conformation from HJ DNA in complex with RuvA. In the full resolvosome a probable DNA-RuvA(4)-RuvB(12)-RuvC(2) complex forms which resolves the HJ. Mg(2+) serves as cofactor.

It is found in the cytoplasm. It catalyses the reaction Endonucleolytic cleavage at a junction such as a reciprocal single-stranded crossover between two homologous DNA duplexes (Holliday junction).. In terms of biological role, the RuvA-RuvB-RuvC complex processes Holliday junction (HJ) DNA during genetic recombination and DNA repair. Endonuclease that resolves HJ intermediates. Cleaves cruciform DNA by making single-stranded nicks across the HJ at symmetrical positions within the homologous arms, yielding a 5'-phosphate and a 3'-hydroxyl group; requires a central core of homology in the junction. The consensus cleavage sequence is 5'-(A/T)TT(C/G)-3'. Cleavage occurs on the 3'-side of the TT dinucleotide at the point of strand exchange. HJ branch migration catalyzed by RuvA-RuvB allows RuvC to scan DNA until it finds its consensus sequence, where it cleaves and resolves the cruciform DNA. The chain is Crossover junction endodeoxyribonuclease RuvC from Sodalis glossinidius (strain morsitans).